Here is a 335-residue protein sequence, read N- to C-terminus: MTEIYDFDKSAWDIKGSIAPIQPTTYSDGRLVPQVRVIDPGLGDRKDECFMYMFLLGVVEDSDPLGPPIGRAFGSLPLGVGRSTAKPEELLKEATELDIVVRRTAGLNEKLVFYNNTPLTLLTPWRKVLTTGSVFNANQVCNAVNLIPLDTPQRFRVVYMSITRLSDNGYYTVPRRMLEFRSVNAVAFNLLVTLRIDKAIGPGKIIDNAEQLPEATFMVHIGNFRRKKSEVYSADYCKMKIEKMGLVFALGGIGGTSLHIRSTGKMSKTLHAQLGFKKTLCYPLMDINEDLNRLLWRSRCKIVRIQAVLQPSVPQEFRIYDDVIINDDQGLFKVL.

The protein belongs to the morbillivirus/respirovirus/rubulavirus M protein family. Homodimer. Dimerization is critical for virion formation. Interacts with host ANP32B.

Its subcellular location is the virion. The protein localises to the host cell membrane. The M protein has a crucial role in virus assembly and interacts with the RNP complex as well as with the viral membrane. Associates with phosphatidylserine (PS) and phosphatidylinositol 4,5-bisphosphate (PIP2) at the plasma membrane. Interaction with PIP2 triggers matrix protein lattice polymerization. Matrix proteins induce host membrane deformation and curvature necessary for virion assembly/budding. This chain is Matrix protein (M), found in Homo sapiens (Human).